The primary structure comprises 1190 residues: ATPase histone chaperone abo1 (1190 aa).

A compositionally biased stretch (basic and acidic residues) spans 1–11 (MKEEASEHGGS). Disordered stretches follow at residues 1-185 (MKEE…RKTH) and 204-253 (YIDS…DLAD). Composition is skewed to acidic residues over residues 52–62 (QEDEGDEDWEE) and 82–106 (SEGD…DSED). Positions 112–131 (VRSKPKYKPGTRRSTRLRNR) are enriched in basic residues. The segment covering 141 to 152 (EEHRPILRERTS) has biased composition (basic and acidic residues). 309 to 314 (PGTGKT) provides a ligand contact to ATP. The Bromo domain maps to 794–922 (RLLNKLKIKL…ANVLLGVEDM (129 aa)).

The protein belongs to the AAA ATPase family. Homohexamer. Interacts with the FACT complex subunits spt16 and pob3. Interacts with histone H3-H4 (via N-terminus).

It is found in the nucleus. It localises to the chromosome. It carries out the reaction ATP + H2O = ADP + phosphate + H(+). Its function is as follows. ATPase histone chaperone which facilitates loading of histone H3-H4 onto DNA in an ATP-dependent manner. Plays a genome-wide role in nucleosome organization and establishment of chromatin. Also plays a role in heterochromatin assembly by stabilizing recruitment of the histone methyltransferase clr4 to methylated histone H3, to promote the transition from H3K9me2 to H3K9me3. This Schizosaccharomyces pombe (strain 972 / ATCC 24843) (Fission yeast) protein is ATPase histone chaperone abo1.